A 266-amino-acid polypeptide reads, in one-letter code: Hydroxyethylthiazole kinase (266 aa).

Residue M43 participates in substrate binding. Residues R119 and T166 each contribute to the ATP site. G193 provides a ligand contact to substrate.

The protein belongs to the Thz kinase family. Requires Mg(2+) as cofactor.

The enzyme catalyses 5-(2-hydroxyethyl)-4-methylthiazole + ATP = 4-methyl-5-(2-phosphooxyethyl)-thiazole + ADP + H(+). It functions in the pathway cofactor biosynthesis; thiamine diphosphate biosynthesis; 4-methyl-5-(2-phosphoethyl)-thiazole from 5-(2-hydroxyethyl)-4-methylthiazole: step 1/1. Functionally, catalyzes the phosphorylation of the hydroxyl group of 4-methyl-5-beta-hydroxyethylthiazole (THZ). This chain is Hydroxyethylthiazole kinase, found in Methanococcus maripaludis (strain C5 / ATCC BAA-1333).